The sequence spans 256 residues: tRNA pseudouridine synthase A (256 aa).

Residue aspartate 55 is the Nucleophile of the active site. Substrate is bound at residue tyrosine 113.

The protein belongs to the tRNA pseudouridine synthase TruA family. As to quaternary structure, homodimer.

It carries out the reaction uridine(38/39/40) in tRNA = pseudouridine(38/39/40) in tRNA. In terms of biological role, formation of pseudouridine at positions 38, 39 and 40 in the anticodon stem and loop of transfer RNAs. In Ligilactobacillus salivarius (strain UCC118) (Lactobacillus salivarius), this protein is tRNA pseudouridine synthase A.